The sequence spans 146 residues: Large ribosomal subunit protein uL15 (146 aa).

The disordered stretch occupies residues 1-58 (MRLHELHPAPGSRPRATRVGRGIGSGLGKTSGRGHKGQKARSGGGVRRGFEGGQMPLT). Positions 21–31 (RGIGSGLGKTS) are enriched in gly residues.

Belongs to the universal ribosomal protein uL15 family. As to quaternary structure, part of the 50S ribosomal subunit.

In terms of biological role, binds to the 23S rRNA. The chain is Large ribosomal subunit protein uL15 from Moorella thermoacetica (strain ATCC 39073 / JCM 9320).